We begin with the raw amino-acid sequence, 193 residues long: RNA polymerase sigma-H factor (193 aa).

The short motif at 49-62 is the Polymerase core binding element; it reads DVAQEAFIKAYRAL. Positions 157-176 form a DNA-binding region, H-T-H motif; that stretch reads YEDIATVMQCPVGTVRSRIF.

It belongs to the sigma-70 factor family. ECF subfamily.

Its function is as follows. Sigma factors are initiation factors that promote the attachment of RNA polymerase to specific initiation sites and are then released. This sigma factor regulates genes such as algD, involved in alginate biosynthesis. In Pseudomonas aeruginosa (strain ATCC 15692 / DSM 22644 / CIP 104116 / JCM 14847 / LMG 12228 / 1C / PRS 101 / PAO1), this protein is RNA polymerase sigma-H factor (algU).